We begin with the raw amino-acid sequence, 248 residues long: Probable transcriptional regulatory protein Plav_2114 (248 aa).

It belongs to the TACO1 family.

It is found in the cytoplasm. This chain is Probable transcriptional regulatory protein Plav_2114, found in Parvibaculum lavamentivorans (strain DS-1 / DSM 13023 / NCIMB 13966).